The sequence spans 826 residues: Ribonucleases P/MRP protein subunit POP1 (826 aa).

Disordered stretches follow at residues 1 to 24 (MATT…PRKI) and 49 to 91 (NKDF…SGGD). A Nuclear localization signal motif is present at residues 58 to 65 (KRRRTNSY). The segment covering 70–79 (AKKRNIKRQK) has biased composition (basic residues).

In terms of assembly, component of nuclear RNase P and RNase MRP ribonucleoproteins. RNase P consists of a catalytic RNA moiety and different protein chains. Several subunits of RNase P are also part of the RNase MRP complex. RNase MRP consists of a catalytic RNA moiety and several protein subunits.

It localises to the nucleus. The protein localises to the nucleolus. Functionally, component of ribonuclease P, a ribonucleoprotein complex that generates mature tRNA molecules by cleaving their 5'-ends. Also a component of the MRP ribonuclease complex, which cleaves pre-rRNA sequences. Required for rRNA maturation, including 5.8S rRNA processing. This Arabidopsis thaliana (Mouse-ear cress) protein is Ribonucleases P/MRP protein subunit POP1.